A 459-amino-acid chain; its full sequence is Argininosuccinate lyase (459 aa).

This sequence belongs to the lyase 1 family. Argininosuccinate lyase subfamily.

It is found in the cytoplasm. The catalysed reaction is 2-(N(omega)-L-arginino)succinate = fumarate + L-arginine. It functions in the pathway amino-acid biosynthesis; L-arginine biosynthesis; L-arginine from L-ornithine and carbamoyl phosphate: step 3/3. This is Argininosuccinate lyase from Methylobacterium radiotolerans (strain ATCC 27329 / DSM 1819 / JCM 2831 / NBRC 15690 / NCIMB 10815 / 0-1).